A 64-amino-acid chain; its full sequence is Large ribosomal subunit protein bL35 (64 aa).

Residues 1–28 form a disordered region; that stretch reads MPKMKTHSGAKKRFKLTGSGKLKRQQAN.

Belongs to the bacterial ribosomal protein bL35 family.

In Renibacterium salmoninarum (strain ATCC 33209 / DSM 20767 / JCM 11484 / NBRC 15589 / NCIMB 2235), this protein is Large ribosomal subunit protein bL35.